We begin with the raw amino-acid sequence, 793 residues long: Ent-copalyl diphosphate synthase, chloroplastic (793 aa).

The N-terminal 47 residues, 1 to 47 (MPLASNPVAFLPSSTAHGDLPAAAFSRSSAGCLQLCRPLTPTSSLQC), are a transit peptide targeting the chloroplast. Positions 372 and 374 each coordinate Mg(2+). The DXDD motif motif lies at 372 to 375 (DIDD).

The protein belongs to the terpene synthase family. The cofactor is Mg(2+).

The protein resides in the plastid. It localises to the chloroplast. The catalysed reaction is (2E,6E,10E)-geranylgeranyl diphosphate = ent-copalyl diphosphate. It functions in the pathway plant hormone biosynthesis; gibberellin biosynthesis. Functionally, catalyzes the conversion of geranylgeranyl diphosphate (GGPP) to the gibberellin precursor ent-copalyl diphosphate (CPP). The sequence is that of Ent-copalyl diphosphate synthase, chloroplastic from Salvia miltiorrhiza (Chinese sage).